The primary structure comprises 260 residues: Ribosomal RNA small subunit methyltransferase A (260 aa).

The S-adenosyl-L-methionine site is built by N16, L18, G43, E64, D86, and N108.

It belongs to the class I-like SAM-binding methyltransferase superfamily. rRNA adenine N(6)-methyltransferase family. RsmA subfamily.

It localises to the cytoplasm. It catalyses the reaction adenosine(1518)/adenosine(1519) in 16S rRNA + 4 S-adenosyl-L-methionine = N(6)-dimethyladenosine(1518)/N(6)-dimethyladenosine(1519) in 16S rRNA + 4 S-adenosyl-L-homocysteine + 4 H(+). Specifically dimethylates two adjacent adenosines (A1518 and A1519) in the loop of a conserved hairpin near the 3'-end of 16S rRNA in the 30S particle. May play a critical role in biogenesis of 30S subunits. The polypeptide is Ribosomal RNA small subunit methyltransferase A (Buchnera aphidicola subsp. Baizongia pistaciae (strain Bp)).